Here is a 722-residue protein sequence, read N- to C-terminus: Ribosomal RNA large subunit methyltransferase K/L (722 aa).

Residues threonine 55–leucine 167 form the THUMP domain.

It belongs to the methyltransferase superfamily. RlmKL family.

It localises to the cytoplasm. It catalyses the reaction guanosine(2445) in 23S rRNA + S-adenosyl-L-methionine = N(2)-methylguanosine(2445) in 23S rRNA + S-adenosyl-L-homocysteine + H(+). The enzyme catalyses guanosine(2069) in 23S rRNA + S-adenosyl-L-methionine = N(2)-methylguanosine(2069) in 23S rRNA + S-adenosyl-L-homocysteine + H(+). Specifically methylates the guanine in position 2445 (m2G2445) and the guanine in position 2069 (m7G2069) of 23S rRNA. The protein is Ribosomal RNA large subunit methyltransferase K/L of Desulfotalea psychrophila (strain LSv54 / DSM 12343).